Consider the following 567-residue polypeptide: Glucose-6-phosphate isomerase, cytosolic B (567 aa).

D-glucose 6-phosphate-binding positions include 156-157 (GS), 212-217 (SKTFTT), Gln356, Glu360, His391, and Lys516. Glu360 acts as the Proton donor in catalysis. Active-site residues include His391 and Lys516.

Belongs to the GPI family. Homodimer.

The protein resides in the cytoplasm. It catalyses the reaction alpha-D-glucose 6-phosphate = beta-D-fructose 6-phosphate. It functions in the pathway carbohydrate degradation; glycolysis; D-glyceraldehyde 3-phosphate and glycerone phosphate from D-glucose: step 2/4. Functionally, catalyzes the conversion of glucose-6-phosphate to fructose-6-phosphate, the second step in glycolysis, and the reverse reaction during gluconeogenesis. The protein is Glucose-6-phosphate isomerase, cytosolic B of Oryza sativa subsp. japonica (Rice).